Reading from the N-terminus, the 213-residue chain is Probable nicotinate-nucleotide adenylyltransferase (213 aa).

This sequence belongs to the NadD family.

The enzyme catalyses nicotinate beta-D-ribonucleotide + ATP + H(+) = deamido-NAD(+) + diphosphate. It functions in the pathway cofactor biosynthesis; NAD(+) biosynthesis; deamido-NAD(+) from nicotinate D-ribonucleotide: step 1/1. Catalyzes the reversible adenylation of nicotinate mononucleotide (NaMN) to nicotinic acid adenine dinucleotide (NaAD). The protein is Probable nicotinate-nucleotide adenylyltransferase of Ruegeria pomeroyi (strain ATCC 700808 / DSM 15171 / DSS-3) (Silicibacter pomeroyi).